A 1437-amino-acid chain; its full sequence is uncharacterized protein (1437 aa).

An N-terminal signal peptide occupies residues 1–25 (MRRGCRHHLAAVVLLIATFPPLAYN). Over 26-1326 (QNIGGINQNI…SRIKENYFKW (1301 aa)) the chain is Extracellular. Residues Asn-103, Asn-315, Asn-364, Asn-492, Asn-605, Asn-676, and Asn-914 are each glycosylated (N-linked (GlcNAc...) asparagine). Residues 193–356 (AFFGQQASQA…GRYMFRVDDV (164 aa)) enclose the NIDO domain. Positions 648 to 829 (VKEKSREMCH…FRCQMFYWRR (182 aa)) constitute an AMOP domain. A helical transmembrane segment spans residues 1327–1347 (LAVIAGIVGIIIVILLIFLVF). The Cytoplasmic portion of the chain corresponds to 1348–1437 (WCIKRKKLQE…QGMLGLNTSV (90 aa)). Residues 1394–1419 (PRTVAMPPPRGTTATPMTLEPRGFSP) are disordered.

It localises to the membrane. This is an uncharacterized protein from Caenorhabditis elegans.